A 916-amino-acid chain; its full sequence is Protein translocase subunit SecA (916 aa).

Residues glutamine 87, 105–109 (GEGKT), and aspartate 507 contribute to the ATP site. The Zn(2+) site is built by cysteine 900, cysteine 902, cysteine 911, and histidine 912.

Belongs to the SecA family. Monomer and homodimer. Part of the essential Sec protein translocation apparatus which comprises SecA, SecYEG and auxiliary proteins SecDF-YajC and YidC. The cofactor is Zn(2+).

It localises to the cell inner membrane. Its subcellular location is the cytoplasm. It catalyses the reaction ATP + H2O + cellular proteinSide 1 = ADP + phosphate + cellular proteinSide 2.. Its function is as follows. Part of the Sec protein translocase complex. Interacts with the SecYEG preprotein conducting channel. Has a central role in coupling the hydrolysis of ATP to the transfer of proteins into and across the cell membrane, serving both as a receptor for the preprotein-SecB complex and as an ATP-driven molecular motor driving the stepwise translocation of polypeptide chains across the membrane. The polypeptide is Protein translocase subunit SecA (Neisseria gonorrhoeae (strain ATCC 700825 / FA 1090)).